The sequence spans 87 residues: RNA-binding protein Hfq (87 aa).

Positions 9–68 (DPFLNALRRERIPVSIYLVNGIKLQGQIESFDQFVILLKNTVSQMVYKHAISTVVPARAV) constitute a Sm domain.

Belongs to the Hfq family. As to quaternary structure, homohexamer.

RNA chaperone that binds small regulatory RNA (sRNAs) and mRNAs to facilitate mRNA translational regulation in response to envelope stress, environmental stress and changes in metabolite concentrations. Also binds with high specificity to tRNAs. In Aeromonas hydrophila subsp. hydrophila (strain ATCC 7966 / DSM 30187 / BCRC 13018 / CCUG 14551 / JCM 1027 / KCTC 2358 / NCIMB 9240 / NCTC 8049), this protein is RNA-binding protein Hfq.